A 910-amino-acid polypeptide reads, in one-letter code: p53-induced death domain-containing protein 1 (910 aa).

The tract at residues 1-25 is disordered; the sequence is MAATVEGPELEAAAAAGDASEDSDA. Position 2 is an N-acetylalanine (Ala-2). LRR repeat units lie at residues 126 to 147, 149 to 171, 172 to 194, 195 to 216, 218 to 240, 241 to 263, and 264 to 285; these read HLAH…VLQM, GLGA…GALP, ALTF…GALS, TLQR…IGGL, SLLE…AGLR, SLRL…ARLP, and LLTR…LLDA. A phosphoserine mark is found at Ser-299 and Ser-305. 2 ZU5 domains span residues 322 to 454 and 455 to 596; these read DLDS…VSRP and VSNA…WYTT. Peptidase S68 regions lie at residues 423–452 and 566–594; these read DLET…LVVS and DITA…WLWY. Residues His-444, Ser-446, His-586, and Ser-588 contribute to the active site. Residues 580-716 form a UPA domain region; that stretch reads ARFQVTHFSW…TTTLDREAQA (137 aa). The region spanning 788–873 is the Death domain; sequence TQSNLLSVAG…DVAEEVRAVL (86 aa). Residues 884–910 are disordered; that stretch reads IRRMGLAPKDPALPGSSAPQPPEPAQA.

Forms a complex named the PIDDosome with CASP2 and CRADD. Forms a complex with IKBKG and RIPK1. Interacts with FADD and MADD. Post-translationally, undergoes autoproteolytic processing whose extent either directs cells towards survival or apoptotic pathways. Autoproteolytically cleaved into two main fragments PIDD-N and PIDD-C. PIDD-C can be further processed into PIDD-CC, a processing which is enhanced by DNA damage. The cleavage producing PIDD-C is required for translocation of PIDD1 to the nucleus upon DNA damage and activation of NF-kappa-B. PIDD-CC mediates the interaction with CRADD and the cleavage producing PIDD-CC is required for the activation of CASP2. PIDD-N remains associated with PIDD-C and PIDD-CC after cleavage. As to expression, ubiquitous.

It localises to the cytoplasm. It is found in the nucleus. In terms of biological role, component of the DNA damage/stress response pathway that functions downstream of p53/TP53 and can either promote cell survival or apoptosis. Associated with CRADD and the CASP2 caspase, it forms the PIDDosome a complex that activates CASP2 and triggers apoptosis. Associated with IKBKG and RIPK1, it enhances sumoylation and ubiquitination of IKBKG which is important for activation of the transcription factor NF-kappa-B. The sequence is that of p53-induced death domain-containing protein 1 from Homo sapiens (Human).